An 81-amino-acid chain; its full sequence is Large ribosomal subunit protein bL31B (81 aa).

This sequence belongs to the bacterial ribosomal protein bL31 family. Type B subfamily. In terms of assembly, part of the 50S ribosomal subunit.

The chain is Large ribosomal subunit protein bL31B from Pediococcus pentosaceus (strain ATCC 25745 / CCUG 21536 / LMG 10740 / 183-1w).